The following is a 221-amino-acid chain: Pre-hexon-linking protein VIII (221 aa).

Residue threonine 65 is modified to Phosphothreonine; by host. Positions 113 to 150 (AAPWSGVKTGSFCGRGLQLAEPPTTAIYPSGLFHLGRG) are excised as a propeptide.

It belongs to the adenoviridae hexon-linking protein family. Interacts with the peripentonal hexons as well as the hexons in the facets. Part of a complex composed of the core-capsid bridging protein, the endosome lysis protein VI and the hexon-linking protein VIII; these interactions bridge the virus core to the capsid. Cleaved by the viral protease during virion maturation. May cause the middle segment to be shed from the capsid.

Its subcellular location is the virion. The protein localises to the host nucleus. Structural component of the virion that acts as a cement protein on the capsid interior and which glue the peripentonal hexons and group-of-nine hexons together. The protein is Pre-hexon-linking protein VIII of Sus scrofa (Pig).